The chain runs to 276 residues: ATP synthase subunit delta (276 aa).

The protein belongs to the ATPase delta chain family. As to quaternary structure, F-type ATPases have 2 components, F(1) - the catalytic core - and F(0) - the membrane proton channel. F(1) has five subunits: alpha(3), beta(3), gamma(1), delta(1), epsilon(1). F(0) has three main subunits: a(1), b(2) and c(10-14). The alpha and beta chains form an alternating ring which encloses part of the gamma chain. F(1) is attached to F(0) by a central stalk formed by the gamma and epsilon chains, while a peripheral stalk is formed by the delta and b chains.

The protein resides in the cell membrane. In terms of biological role, f(1)F(0) ATP synthase produces ATP from ADP in the presence of a proton or sodium gradient. F-type ATPases consist of two structural domains, F(1) containing the extramembraneous catalytic core and F(0) containing the membrane proton channel, linked together by a central stalk and a peripheral stalk. During catalysis, ATP synthesis in the catalytic domain of F(1) is coupled via a rotary mechanism of the central stalk subunits to proton translocation. This protein is part of the stalk that links CF(0) to CF(1). It either transmits conformational changes from CF(0) to CF(1) or is implicated in proton conduction. This chain is ATP synthase subunit delta, found in Frankia casuarinae (strain DSM 45818 / CECT 9043 / HFP020203 / CcI3).